The sequence spans 360 residues: MNAPLGGIWLWLPLLLTWLTPEVSSSWWYMRATGGASRVMCDNVPGLVSRQRQLCHRHPDVMRAIGLGVAEWTAECQHQFRQHRWNCNTLDRDHSLFGRVLLRSSRESAFVYAISSAGVVFAITRACSQGELRSCSCDPKKKGTAKDSKGTFDWGGCSDNIDYGIKFARAFVDAKERKGKDARALMNLHNNRAGRKAVKRFLKQECKCHGVSGSCTLRTCWLAMADFRKTGDYLWRKYNGAIQVVMNQDGTGFTVANKKFKKPTKNDLVYFENSPDYCIRDRDAGSLGTAGRVCNLTSRGMDSCEVMCCGRGYDTSRVTRMTKCECKFHWCCAVRCQDCLEALDVHTCKAPKSADWASPT.

A signal peptide spans 1–25 (MNAPLGGIWLWLPLLLTWLTPEVSS). 11 disulfides stabilise this stretch: Cys-76–Cys-87, Cys-127–Cys-135, Cys-137–Cys-157, Cys-206–Cys-220, Cys-208–Cys-215, Cys-278–Cys-309, Cys-294–Cys-304, Cys-308–Cys-348, Cys-324–Cys-339, Cys-326–Cys-336, and Cys-331–Cys-332. Ser-212 carries O-palmitoleoyl serine; by PORCN lipidation. An N-linked (GlcNAc...) asparagine glycan is attached at Asn-295.

The protein belongs to the Wnt family. Palmitoleoylation is required for efficient binding to frizzled receptors. Depalmitoleoylation leads to Wnt signaling pathway inhibition.

The protein localises to the secreted. Its subcellular location is the extracellular space. It localises to the extracellular matrix. In terms of biological role, ligand for members of the frizzled family of seven transmembrane receptors. Functions in the canonical Wnt signaling pathway that results in activation of transcription factors of the TCF/LEF family. Functions as a upstream regulator of FGF10 expression. Plays an important role in embryonic lung development. May contribute to embryonic brain development by regulating the proliferation of dopaminergic precursors and neurons. The protein is Protein Wnt-2 (WNT2) of Equus caballus (Horse).